We begin with the raw amino-acid sequence, 463 residues long: MSTPEFKVIIVGGSLAGLTLAHCLLRAGISHIVLERRSVIAPEEGASIGILPNGARVLDQLGIYEHIQDTTEPLSTAHIRYPDGFYFSSRYPEIIKERFGYPIAFLPRRRLLEILYTSYPDHSNIYTNKNVIKVQSHDNQVSVLTEDGNTYRGDLVVGADGVNSRVLSEIWKLAGNPSLTKREGRGRTIEYACVFGISSPISDLKPGEQVNAFYDGLTIVTIHGRNGEIFWFFIKKLSRRYIYPDLIRLQQKDAEGICEEAKSLTVWKGVTFGDIWERRETASLTVLDEFLHHTWSWDRSVCVGDSIHKMTPNFGQGANTAIEDSAALANLLHSLIKEKRAEKPTDSDISLLLRQFKSQRLRRVQKIYKMSRFVTRLQARDGLLNTLLGRHYAPYAADLPAKIASGCIAGAEVLDYLPLPKVTGAGWNRGHRRSTMYILLGFTGVFTSALAMVVLLHIRDIAS.

Residues 5-25 (EFKVIIVGGSLAGLTLAHCLL) traverse the membrane as a helical segment. FAD-binding residues include glutamate 35, glycine 49, arginine 108, aspartate 305, and alanine 318. The helical transmembrane segment at 438–458 (ILLGFTGVFTSALAMVVLLHI) threads the bilayer.

This sequence belongs to the paxM FAD-dependent monooxygenase family. FAD is required as a cofactor.

It is found in the membrane. The protein operates within secondary metabolite biosynthesis. In terms of biological role, FAD-dependent monooxygenase; part of the gene cluster that mediates the biosynthesis of the indole diterpenes nodulisporic acids (NA). Nodulisporic acid A (NAA) and its chemically modified derivatives are of particular significance because of their highly potent insecticidal activity against blood-feeding arthropods and lack of observable adverse effects on mammals, in particular the tremogenicity associated with the paspaline-derived IDTs is not observed. The geranylgeranyl diphosphate (GGPP) synthase ggs1, localized outside of the cluster, is proposed to catalyze the first step in nodulisporic acid biosynthesis via conversion of farnesyl pyrophosphate and isopentyl pyrophosphate into geranylgeranyl pyrophosphate (GGPP). Condensation of indole-3-glycerol phosphate with GGPP by the prenyl transferase nodC then forms 3-geranylgeranylindole (3-GGI). Epoxidation by the FAD-dependent monooxygenase nodM leads to a single-epoxidized-GGI that is substrate of the terpene cyclase nodB for cyclization to yield emindole SB. The terminal methyl carbon, C28, of emindole SB is then oxidized by the cytochrome P450 monooxygenase nodW to produce nodulisporic acid F (NAF), the pentacyclic core of NAA. NAF is converted to nodulisporic acid E (NAE) via prenylation. This step is probably performed by one of the indole diterpene prenyltransferases nodD1 or nodD2. Several oxidation steps performed by the FAD-linked oxidoreductase nodO and one of the cytochrome P450 monooxygenase nodR, nodX or nodZ further convert NAE to nodulisporic acid D (NAD). NAD is substrate of cytochrome P450 monooxygenase nodJ to produce the precursor of nodulisporic acid C (NAC), converted to NAC by one of the indole diterpene prenyltransferases nodD1 or nodD2. The FAD-dependent monooxygenase nodY2 then oxidizes NAC to nodulisporic acid B (NAB). Finally NAB is converted to NAA by one of the cytochrome P450 monooxygenases nodR, nodX or nodZ. The polypeptide is FAD-dependent monooxygenase nodM (Hypoxylon pulicicidum).